Consider the following 792-residue polypeptide: MEKRQLYSSQSQSQPLNIITNTINSRPSLLRKPASSSSQSNDRISYPPSTDSKFIQQQYHQPLLTNTDIKLEDIESSSSNNNPLKNSINNVSMQISQLNSSHHSRALLMQKRNNPTTNIRPTVKKKLDDTHKPLTSNFKKPITPISKLNTNMNNNNINNKNNNININSNNSSNSNNNILSPVQNNTISPNSNLLNSSIKFEKSNFFSTMYSSPTTITTTSTTLNNDNNNNISISSSCSNNSSFDLQQQHALHERMNKIDQFTQTVRGNLQSQFDNISEQLKPPRLSLSIQDIKTRLDFEEKNKEVEKIKLELKNVLQSLKEKEKELMEAHYKVSQVSVLKDNMERDLQQSNQMILDLQHEIRSSSLKAIQVDEKFNNMKDVTKDLDDEILRLNQLVRERDTEIESLRKENRELLEKSRSDEKVRRKLHNTIQELKGNIRVFCRIRPDFSSGQGANGSVFNIPAGTDNLVEVKSPTIDSFNGEASIKKSTFTFDRVFGPSSTQELVFEDISQLVQSSLDGYNTCIFTYGQTGSGKTHSILGDLKVPSQRGMIPRTVEKIFSSIQDLTEKGWTYQIECFFLEIYNETINDLLNTTTTTTGGNSKSNEIKYEIKHNPDTNVTTVTNMTVVPVTHPSQVYELLNLANKNRSVAKTLCNERSSRSHTVFQLKLIGYNQQSSERTQGLLNLIDLAGSERVSRSGVEGKQLKETQAINKSLSSLGDVISALANKEQHIPYRNSKLTFLLQNSIGGNSKTLMFVNISPELKDLQESTSSLRFAAKVNSCELGAARKQKII.

Disordered stretches follow at residues 22–50 (TINSRPSLLRKPASSSSQSNDRISYPPST) and 162–183 (NNININSNNSSNSNNNILSPVQ). Positions 34-50 (ASSSSQSNDRISYPPST) are enriched in polar residues. Residues 284 to 423 (RLSLSIQDIK…LEKSRSDEKV (140 aa)) are a coiled coil. A Kinesin motor domain is found at 437 to 781 (NIRVFCRIRP…LRFAAKVNSC (345 aa)). 528–535 (GQTGSGKT) lines the ATP pocket.

It belongs to the TRAFAC class myosin-kinesin ATPase superfamily. Kinesin family. NCD subfamily.

It is found in the nucleus. The protein localises to the cytoplasm. The protein resides in the cytoskeleton. Its subcellular location is the spindle. In terms of biological role, microtubule-dependent motor that is probably involved in microtubule organization in the mitotic spindle. This Dictyostelium discoideum (Social amoeba) protein is Kinesin-related protein 2 (kif2).